The following is a 426-amino-acid chain: Dihydroorotase (426 aa).

Residues His-61 and His-63 each contribute to the Zn(2+) site. Substrate is bound by residues 63–65 (HCR) and Asn-95. Residues Glu-146, His-180, His-229, and Asp-297 each contribute to the Zn(2+) site. Residue Asp-297 is part of the active site. His-301 is a binding site for substrate.

It belongs to the metallo-dependent hydrolases superfamily. DHOase family. Class I DHOase subfamily. Requires Zn(2+) as cofactor.

It carries out the reaction (S)-dihydroorotate + H2O = N-carbamoyl-L-aspartate + H(+). The protein operates within pyrimidine metabolism; UMP biosynthesis via de novo pathway; (S)-dihydroorotate from bicarbonate: step 3/3. In terms of biological role, catalyzes the reversible cyclization of carbamoyl aspartate to dihydroorotate. The polypeptide is Dihydroorotase (Methanopyrus kandleri (strain AV19 / DSM 6324 / JCM 9639 / NBRC 100938)).